A 374-amino-acid chain; its full sequence is Tryptophan--tRNA ligase (374 aa).

The 'HIGH' region signature appears at proline 71–histidine 79. A 'KMSKS' region motif is present at residues lysine 247–serine 251.

This sequence belongs to the class-I aminoacyl-tRNA synthetase family.

The protein localises to the cytoplasm. It catalyses the reaction tRNA(Trp) + L-tryptophan + ATP = L-tryptophyl-tRNA(Trp) + AMP + diphosphate + H(+). The sequence is that of Tryptophan--tRNA ligase from Methanopyrus kandleri (strain AV19 / DSM 6324 / JCM 9639 / NBRC 100938).